A 953-amino-acid chain; its full sequence is Valine--tRNA ligase (953 aa).

The 'HIGH' region motif lies at 42–52 (PNVTGSLHMGH). The 'KMSKS' region motif lies at 554 to 558 (KMSKS). Lys557 serves as a coordination point for ATP. Positions 884-952 (LIDKDAELDR…LEQQKATIAA (69 aa)) form a coiled coil.

It belongs to the class-I aminoacyl-tRNA synthetase family. ValS type 1 subfamily. As to quaternary structure, monomer.

The protein resides in the cytoplasm. It catalyses the reaction tRNA(Val) + L-valine + ATP = L-valyl-tRNA(Val) + AMP + diphosphate. In terms of biological role, catalyzes the attachment of valine to tRNA(Val). As ValRS can inadvertently accommodate and process structurally similar amino acids such as threonine, to avoid such errors, it has a 'posttransfer' editing activity that hydrolyzes mischarged Thr-tRNA(Val) in a tRNA-dependent manner. In Vibrio cholerae serotype O1 (strain ATCC 39315 / El Tor Inaba N16961), this protein is Valine--tRNA ligase.